The primary structure comprises 1849 residues: Protein TANC1 (1849 aa).

At Met-1 the chain carries N-acetylmethionine. Disordered stretches follow at residues 1–47 and 59–109; these read MLKA…TTED and MSLP…FREG. Positions 8-21 are enriched in basic and acidic residues; it reads KSREGVKGSKKEAG. Polar residues predominate over residues 27 to 46; that stretch reads ETPTLSSSGDSPVNSLSTTE. Residues Ser-60, Ser-63, Ser-64, Ser-204, Ser-267, and Ser-455 each carry the phosphoserine modification. Disordered stretches follow at residues 264 to 309 and 430 to 481; these read DNCS…PRPN and VASS…QRPR. The segment covering 451 to 468 has biased composition (low complexity); that stretch reads TPLLSPSSSTSALSAART. ANK repeat units follow at residues 886–918, 924–953, 957–986, 990–1019, 1030–1059, 1068–1097, 1101–1130, 1134–1163, 1167–1196, 1200–1229, and 1233–1262; these read EGLS…NVNY, NNAP…CLDG, NGMN…RVDH, KGQC…SAGP, ALQQ…EHEI, WGET…AVSR, RGVP…DVNP, QGRT…ALSS, EGLS…EIDQ, NGRT…VIEH, and SGMR…KLGN. 3 TPR repeats span residues 1279–1312, 1326–1359, and 1361–1393; these read LQKL…FPRE, VSLY…KPKS, and EAFY…CPTN. Residues 1410-1421 are compositionally biased toward low complexity; the sequence is LQRNQQQKQQAP. 4 disordered regions span residues 1410 to 1503, 1527 to 1605, 1635 to 1711, and 1812 to 1849; these read LQRN…ISKS, NQHL…GESG, QGGP…PRNT, and PHLY…ESNV. 2 positions are modified to phosphoserine: Ser-1429 and Ser-1456. The segment covering 1447–1456 has biased composition (acidic residues); sequence EEAEEEDTSS. Composition is skewed to polar residues over residues 1527 to 1546 and 1593 to 1603; these read NQHL…KVQV and PSQSLQLQRGE. Positions 1649-1679 are enriched in low complexity; sequence SLSSSGSSGSPSSSVKMSSSTSSLTSSSSVS. 3 positions are modified to phosphoserine: Ser-1658, Ser-1666, and Ser-1667.

It belongs to the TANC family. Interacts probably directly with DLG1, DLG4, HOMER1. Interacts with DLGAP1, INA, CAMK2A, GRIN2B and GRIA1. Interacts with TNIK and MINK1. In terms of processing, phosphorylated; by MINK1 and TNIK upon stimulation by RAP2A. As to expression, expressed in heart, lung, liver and kidney. Expressed in brain (at protein level).

Its subcellular location is the postsynaptic density. In terms of biological role, may be a scaffold component in the postsynaptic density. The polypeptide is Protein TANC1 (Tanc1) (Rattus norvegicus (Rat)).